We begin with the raw amino-acid sequence, 354 residues long: Serum paraoxonase/lactonase 3 (354 aa).

Asn-29 carries an N-linked (GlcNAc...) asparagine glycan. An intrachain disulfide couples Cys-42 to Cys-352. The Ca(2+) site is built by Glu-53 and Asp-54. Residue His-114 is the Proton acceptor of the active site. A Ca(2+)-binding site is contributed by Ile-116. Position 165 is a phosphoserine (Ser-165). Residues Asn-167, Asp-168, Asn-223, Asp-268, and Asn-269 each coordinate Ca(2+). N-linked (GlcNAc...) asparagine glycosylation is found at Asn-269 and Asn-323.

The protein belongs to the paraoxonase family. Homodimer. The cofactor is Ca(2+). Post-translationally, the signal sequence is not cleaved.

It localises to the secreted. The protein resides in the extracellular space. It catalyses the reaction a phenyl acetate + H2O = a phenol + acetate + H(+). The enzyme catalyses An aryl dialkyl phosphate + H2O = dialkyl phosphate + an aryl alcohol.. It carries out the reaction an N-acyl-L-homoserine lactone + H2O = an N-acyl-L-homoserine + H(+). Has low activity towards the organophosphate paraxon and aromatic carboxylic acid esters. Rapidly hydrolyzes lactones such as statin prodrugs (e.g. lovastatin). Hydrolyzes aromatic lactones and 5- or 6-member ring lactones with aliphatic substituents but not simple lactones or those with polar substituents. The sequence is that of Serum paraoxonase/lactonase 3 (PON3) from Homo sapiens (Human).